A 31-amino-acid chain; its full sequence is Cytochrome b6-f complex subunit 8 (31 aa).

Residues 5–25 (IVSMAWAALMVVFTFSLSLVI) form a helical membrane-spanning segment.

The protein belongs to the PetN family. The 4 large subunits of the cytochrome b6-f complex are cytochrome b6, subunit IV (17 kDa polypeptide, PetD), cytochrome f and the Rieske protein, while the 4 small subunits are PetG, PetL, PetM and PetN. The complex functions as a dimer.

Its subcellular location is the plastid membrane. Functionally, component of the cytochrome b6-f complex, which mediates electron transfer between photosystem II (PSII) and photosystem I (PSI), cyclic electron flow around PSI, and state transitions. This is Cytochrome b6-f complex subunit 8 from Cuscuta gronovii (Common dodder).